Consider the following 290-residue polypeptide: Glutamate racemase (290 aa).

Substrate contacts are provided by residues 32–33 (DS) and 64–65 (YG). Cysteine 96 serves as the catalytic Proton donor/acceptor. 97–98 (NT) contributes to the substrate binding site. The Proton donor/acceptor role is filled by cysteine 208. 209 to 210 (TH) is a binding site for substrate.

Belongs to the aspartate/glutamate racemases family.

The catalysed reaction is L-glutamate = D-glutamate. Its pathway is cell wall biogenesis; peptidoglycan biosynthesis. Functionally, provides the (R)-glutamate required for cell wall biosynthesis. This Sodalis glossinidius (strain morsitans) protein is Glutamate racemase.